Consider the following 623-residue polypeptide: Chaperone protein HtpG (623 aa).

Residues 1-336 (MVSKQQTMGF…ASDLPLNISR (336 aa)) are a; substrate-binding. Positions 337 to 550 (EILQDNKQVE…EQDMGLEMQR (214 aa)) are b. Residues 551–623 (ILQAAGQQVP…NRVNRLLVSS (73 aa)) form a c region.

It belongs to the heat shock protein 90 family. As to quaternary structure, homodimer.

The protein resides in the cytoplasm. Its function is as follows. Molecular chaperone. Has ATPase activity. In Legionella pneumophila (strain Paris), this protein is Chaperone protein HtpG.